We begin with the raw amino-acid sequence, 81 residues long: MLILTRRVGETLMVGDEVSVTVLGVKGNQVRIGVNAPKDIAVHREEIYQRIQHERAMQSQMQHLEQGNFPTSFDDDDFFNR.

Polar residues predominate over residues 59 to 71 (SQMQHLEQGNFPT). A disordered region spans residues 59-81 (SQMQHLEQGNFPTSFDDDDFFNR).

The protein belongs to the CsrA/RsmA family. As to quaternary structure, homodimer; the beta-strands of each monomer intercalate to form a hydrophobic core, while the alpha-helices form wings that extend away from the core.

The protein resides in the cytoplasm. Its function is as follows. A key translational regulator that binds mRNA to regulate translation initiation and/or mRNA stability. Mediates global changes in gene expression, shifting from rapid growth to stress survival by linking envelope stress, the stringent response and the catabolite repression systems. Usually binds in the 5'-UTR; binding at or near the Shine-Dalgarno sequence prevents ribosome-binding, repressing translation, binding elsewhere in the 5'-UTR can activate translation and/or stabilize the mRNA. Its function is antagonized by small RNA(s). This is Translational regulator CsrA from Psychrobacter sp. (strain PRwf-1).